A 361-amino-acid chain; its full sequence is DNA replication and repair protein RecF (361 aa).

Residue 30-37 coordinates ATP; sequence GDNAQGKT.

It belongs to the RecF family.

Its subcellular location is the cytoplasm. Its function is as follows. The RecF protein is involved in DNA metabolism; it is required for DNA replication and normal SOS inducibility. RecF binds preferentially to single-stranded, linear DNA. It also seems to bind ATP. The polypeptide is DNA replication and repair protein RecF (Clostridium botulinum (strain Alaska E43 / Type E3)).